Here is a 23-residue protein sequence, read N- to C-terminus: Paralytic peptide 2 (23 aa).

A disulfide bridge links Cys-7 with Cys-19.

It belongs to the GBP/PSP1/paralytic peptide family. As to expression, hemolymph.

Functionally, causes rapid, rigid paralysis when injected into Lepidopteran larvae. The physiological role may be to reduce hemolymph loss following injury and promote wound healing. This is Paralytic peptide 2 from Spodoptera exigua (Beet armyworm).